The sequence spans 374 residues: MSKYYDGVEFPFCDEFSKYEKLAKIGQGTFGEVFKAKHRQTGKKVALKKVLMENEKEGFPITALREIKILQLLKHENVVNLIEICRTKGEATQFNRYKGSIYLVFDFCEHDLAGLLSNANVKFTLAEIKRVMQMLLNGLYYIHRNKILHRDMKAANVLITRDGVLKLADFGLARAFSLAKNSQGNRYTNRVVTLWYRPPELLLGERDYGPPIDLWGAGCIMAEMWTRSPIMQGNTEQHQLTLISQLCGSITPEVWPGVDKKYELYQKMELPKGQKRKVKDRLKAYVKDPYALDLIDKLLVLDPAQRIDSDDALNHDFFWSDPMPSDLKNMLSTHNTSMFEYLAPPRRRGHMPQQPANQNRNPATTSQSEFDRVF.

The 300-residue stretch at 19 to 318 (YEKLAKIGQG…SDDALNHDFF (300 aa)) folds into the Protein kinase domain. ATP contacts are provided by residues 25–33 (IGQGTFGEV) and Lys-48. The active-site Proton acceptor is the Asp-151. Positions 345-374 (PRRRGHMPQQPANQNRNPATTSQSEFDRVF) are disordered. Over residues 354 to 368 (QPANQNRNPATTSQS) the composition is skewed to polar residues.

It belongs to the protein kinase superfamily. CMGC Ser/Thr protein kinase family. CDC2/CDKX subfamily. Component of the super elongation complex (SEC). Associates with ccnt1/cyclin-T1, ccnt2/cyclin-T2 or ccnk/cyclin-K to form active P-TEFb.

The protein localises to the nucleus. The protein resides in the cytoplasm. It is found in the PML body. The catalysed reaction is L-seryl-[protein] + ATP = O-phospho-L-seryl-[protein] + ADP + H(+). It carries out the reaction L-threonyl-[protein] + ATP = O-phospho-L-threonyl-[protein] + ADP + H(+). The enzyme catalyses [DNA-directed RNA polymerase] + ATP = phospho-[DNA-directed RNA polymerase] + ADP + H(+). In terms of biological role, protein kinase involved in the regulation of transcription. Member of the cyclin-dependent kinase pair (CDK9/cyclin-T) complex, also called positive transcription elongation factor b (P-TEFb), which facilitates the transition from abortive to productive elongation by phosphorylating the CTD (C-terminal domain) of the large subunit of RNA polymerase II (RNAP II) polr2a, supt5h and rdbp. This complex is inactive when in the 7SK snRNP complex form. Regulates cytokine inducible transcription networks by facilitating promoter recognition of target transcription factors. P-TEFb is also involved in cotranscriptional histone modification, mRNA processing and mRNA export. The chain is Cyclin-dependent kinase 9 from Danio rerio (Zebrafish).